The following is a 277-amino-acid chain: Diaminopimelate epimerase (277 aa).

The substrate site is built by Asn13, Gln46, and Asn66. Catalysis depends on Cys75, which acts as the Proton donor. Residues Gly76–Asn77, Asn160, Asn193, and Glu211–Arg212 each bind substrate. The active-site Proton acceptor is Cys220. Gly221–Ser222 is a binding site for substrate.

Belongs to the diaminopimelate epimerase family. As to quaternary structure, homodimer.

It localises to the cytoplasm. The catalysed reaction is (2S,6S)-2,6-diaminopimelate = meso-2,6-diaminopimelate. It participates in amino-acid biosynthesis; L-lysine biosynthesis via DAP pathway; DL-2,6-diaminopimelate from LL-2,6-diaminopimelate: step 1/1. Its function is as follows. Catalyzes the stereoinversion of LL-2,6-diaminopimelate (L,L-DAP) to meso-diaminopimelate (meso-DAP), a precursor of L-lysine and an essential component of the bacterial peptidoglycan. This is Diaminopimelate epimerase from Legionella pneumophila subsp. pneumophila (strain Philadelphia 1 / ATCC 33152 / DSM 7513).